We begin with the raw amino-acid sequence, 206 residues long: N-(5'-phosphoribosyl)anthranilate isomerase (206 aa).

Belongs to the TrpF family.

It carries out the reaction N-(5-phospho-beta-D-ribosyl)anthranilate = 1-(2-carboxyphenylamino)-1-deoxy-D-ribulose 5-phosphate. The protein operates within amino-acid biosynthesis; L-tryptophan biosynthesis; L-tryptophan from chorismate: step 3/5. This Citrifermentans bemidjiense (strain ATCC BAA-1014 / DSM 16622 / JCM 12645 / Bem) (Geobacter bemidjiensis) protein is N-(5'-phosphoribosyl)anthranilate isomerase.